The sequence spans 462 residues: Siroheme synthase (462 aa).

The precorrin-2 dehydrogenase /sirohydrochlorin ferrochelatase stretch occupies residues 1–201 (MQFLPLFHKL…GKPEEGERLL (201 aa)). Residues 22–23 (EV) and 43–44 (PE) each bind NAD(+). Position 126 is a phosphoserine (serine 126). A uroporphyrinogen-III C-methyltransferase region spans residues 214–462 (GEVYLVGAGP…AWFEGAQGSL (249 aa)). Residue proline 223 participates in S-adenosyl-L-methionine binding. The active-site Proton acceptor is the aspartate 246. The active-site Proton donor is the lysine 268. Residues 299–301 (GGD), isoleucine 304, 329–330 (TA), methionine 381, and glycine 410 each bind S-adenosyl-L-methionine.

In the N-terminal section; belongs to the precorrin-2 dehydrogenase / sirohydrochlorin ferrochelatase family. It in the C-terminal section; belongs to the precorrin methyltransferase family.

It carries out the reaction uroporphyrinogen III + 2 S-adenosyl-L-methionine = precorrin-2 + 2 S-adenosyl-L-homocysteine + H(+). It catalyses the reaction precorrin-2 + NAD(+) = sirohydrochlorin + NADH + 2 H(+). The catalysed reaction is siroheme + 2 H(+) = sirohydrochlorin + Fe(2+). The protein operates within cofactor biosynthesis; adenosylcobalamin biosynthesis; precorrin-2 from uroporphyrinogen III: step 1/1. It functions in the pathway cofactor biosynthesis; adenosylcobalamin biosynthesis; sirohydrochlorin from precorrin-2: step 1/1. It participates in porphyrin-containing compound metabolism; siroheme biosynthesis; precorrin-2 from uroporphyrinogen III: step 1/1. Its pathway is porphyrin-containing compound metabolism; siroheme biosynthesis; siroheme from sirohydrochlorin: step 1/1. The protein operates within porphyrin-containing compound metabolism; siroheme biosynthesis; sirohydrochlorin from precorrin-2: step 1/1. Its function is as follows. Multifunctional enzyme that catalyzes the SAM-dependent methylations of uroporphyrinogen III at position C-2 and C-7 to form precorrin-2 via precorrin-1. Then it catalyzes the NAD-dependent ring dehydrogenation of precorrin-2 to yield sirohydrochlorin. Finally, it catalyzes the ferrochelation of sirohydrochlorin to yield siroheme. This chain is Siroheme synthase, found in Ectopseudomonas mendocina (strain ymp) (Pseudomonas mendocina).